The following is a 347-amino-acid chain: Holliday junction branch migration complex subunit RuvB (347 aa).

The tract at residues 4-186 (INEYGSERIV…FGMIFEMNFY (183 aa)) is large ATPase domain (RuvB-L). Residues L25, R26, G67, K70, T71, T72, 133-135 (EDF), R176, Y186, and R223 contribute to the ATP site. T71 provides a ligand contact to Mg(2+). Positions 187 to 257 (TQEELKMIIT…IVEEVMRLLG (71 aa)) are small ATPAse domain (RuvB-S). The interval 260-347 (EFGLDEMDRK…GLFDGFGNIE (88 aa)) is head domain (RuvB-H). The DNA site is built by R315 and R320.

This sequence belongs to the RuvB family. As to quaternary structure, homohexamer. Forms an RuvA(8)-RuvB(12)-Holliday junction (HJ) complex. HJ DNA is sandwiched between 2 RuvA tetramers; dsDNA enters through RuvA and exits via RuvB. An RuvB hexamer assembles on each DNA strand where it exits the tetramer. Each RuvB hexamer is contacted by two RuvA subunits (via domain III) on 2 adjacent RuvB subunits; this complex drives branch migration. In the full resolvosome a probable DNA-RuvA(4)-RuvB(12)-RuvC(2) complex forms which resolves the HJ.

The protein resides in the cytoplasm. It catalyses the reaction ATP + H2O = ADP + phosphate + H(+). In terms of biological role, the RuvA-RuvB-RuvC complex processes Holliday junction (HJ) DNA during genetic recombination and DNA repair, while the RuvA-RuvB complex plays an important role in the rescue of blocked DNA replication forks via replication fork reversal (RFR). RuvA specifically binds to HJ cruciform DNA, conferring on it an open structure. The RuvB hexamer acts as an ATP-dependent pump, pulling dsDNA into and through the RuvAB complex. RuvB forms 2 homohexamers on either side of HJ DNA bound by 1 or 2 RuvA tetramers; 4 subunits per hexamer contact DNA at a time. Coordinated motions by a converter formed by DNA-disengaged RuvB subunits stimulates ATP hydrolysis and nucleotide exchange. Immobilization of the converter enables RuvB to convert the ATP-contained energy into a lever motion, pulling 2 nucleotides of DNA out of the RuvA tetramer per ATP hydrolyzed, thus driving DNA branch migration. The RuvB motors rotate together with the DNA substrate, which together with the progressing nucleotide cycle form the mechanistic basis for DNA recombination by continuous HJ branch migration. Branch migration allows RuvC to scan DNA until it finds its consensus sequence, where it cleaves and resolves cruciform DNA. In Fervidobacterium nodosum (strain ATCC 35602 / DSM 5306 / Rt17-B1), this protein is Holliday junction branch migration complex subunit RuvB.